The chain runs to 370 residues: Protein STRICTOSIDINE SYNTHASE-LIKE 4 (370 aa).

Positions 1 to 21 (MVLFFSTRFLFFSIFFPCLIS) are cleaved as a signal peptide. Asparagine 101 is a glycosylation site (N-linked (GlcNAc...) asparagine). A Phosphotyrosine modification is found at tyrosine 303.

This sequence belongs to the strictosidine synthase family.

It localises to the vacuole. The chain is Protein STRICTOSIDINE SYNTHASE-LIKE 4 from Arabidopsis thaliana (Mouse-ear cress).